The chain runs to 85 residues: Toxin BmKa3 (85 aa).

The N-terminal stretch at 1-19 (MNYLVFFSLALLLMTGVES) is a signal peptide. The LCN-type CS-alpha/beta domain occupies 21 to 83 (RDGYIADDKN…VPIRVPGKCN (63 aa)). 4 disulfide bridges follow: Cys31-Cys82, Cys35-Cys55, Cys41-Cys65, and Cys45-Cys67.

This sequence belongs to the long (4 C-C) scorpion toxin superfamily. Sodium channel inhibitor family. Alpha subfamily. Expressed by the venom gland.

It localises to the secreted. Functionally, alpha toxins bind voltage-independently at site-3 of sodium channels (Nav) and inhibit the inactivation of the activated channels, thereby blocking neuronal transmission. In Olivierus martensii (Manchurian scorpion), this protein is Toxin BmKa3.